A 517-amino-acid polypeptide reads, in one-letter code: Ribonuclease Y (517 aa).

Residues 2-22 (EILVYIIIGIAIFILSLLVGI) traverse the membrane as a helical segment. Residues 207–267 (TTSTVALPTD…LRREIAKRTL (61 aa)) enclose the KH domain. The 94-residue stretch at 333–426 (VLEHSIEVAQ…VAASDALSAS (94 aa)) folds into the HD domain.

Belongs to the RNase Y family.

It is found in the cell membrane. Endoribonuclease that initiates mRNA decay. The chain is Ribonuclease Y from Petrotoga mobilis (strain DSM 10674 / SJ95).